The sequence spans 496 residues: Fibronectin type III and SPRY domain-containing protein 1 (496 aa).

Positions 4–99 form a coiled coil; it reads QREALRKIIT…ALESSEELLE (96 aa). The COS domain maps to 105–162; sequence LQAMDREDFPQAAKQIKDGVTMAPAFRLSLKAKVSDNMSHLMVDFAQERQMLQALKFL. The Fibronectin type-III domain maps to 164–268; that stretch reads VPSAPVIDLA…EPVTLETPAF (105 aa). A B30.2/SPRY domain is found at 268-477; it reads FMFRLDASTS…VTTGLQVPSS (210 aa). The segment at 301–336 is disordered; the sequence is KAREKDGKGRTASPINSPARGTPSPKRMPSGRGGRD. Arginine 310 and arginine 320 each carry omega-N-methylarginine.

In terms of assembly, oligomerization is required for binding to microtubules.

Its subcellular location is the cytoplasm. It localises to the cytoskeleton. The protein localises to the microtubule organizing center. The protein resides in the centrosome. It is found in the nucleus. Its subcellular location is the cleavage furrow. Its function is as follows. May be involved in microtubule organization and stabilization. The protein is Fibronectin type III and SPRY domain-containing protein 1 (FSD1) of Macaca fascicularis (Crab-eating macaque).